The chain runs to 120 residues: Large ribosomal subunit protein bL20 (120 aa).

This sequence belongs to the bacterial ribosomal protein bL20 family.

In terms of biological role, binds directly to 23S ribosomal RNA and is necessary for the in vitro assembly process of the 50S ribosomal subunit. It is not involved in the protein synthesizing functions of that subunit. The polypeptide is Large ribosomal subunit protein bL20 (Mesoplasma florum (strain ATCC 33453 / NBRC 100688 / NCTC 11704 / L1) (Acholeplasma florum)).